Consider the following 249-residue polypeptide: MMISDATMMQQNYYLNNAQKASDKALENIAAVRAISGVDSANLAIADSLRSQSSTIDQGVANAYDAIGVLQIADASLTNISQSADRLNELSVKMNNAALNDSQKGMLRTEATRIQESINDSFNNATYNGKNVFQTMNFVVGSGTETTNLNPLATDGLSIDSQDSITNFMDQLGSLRSEIGSGINAITSNINASVQNSINSKAAENNLLNNDMAKNVNDFNANYLKENAAAFVAAQSNMQLQSKIANLLQ.

The secreted form is about 1 kDa larger than the whole cell lysate form, presumably due to post-translational modification. A 22 kDa form is also found in the secreted fraction, probably resulting from proteolysis.

It localises to the secreted. Its subcellular location is the host cell surface. In terms of biological role, plays a role in virulence. The sequence is that of Secreted flagellin C (flaC) from Campylobacter jejuni subsp. jejuni serotype O:2 (strain ATCC 700819 / NCTC 11168).